Here is a 421-residue protein sequence, read N- to C-terminus: Trimethyllysine dioxygenase, mitochondrial (421 aa).

A mitochondrion-targeting transit peptide spans 1–15; it reads MWYHKLLHQQSRLQN. Residues Lys179 and Lys236 each carry the N6-acetyllysine modification. Residues His242, Asp244, and His389 each coordinate Fe cation.

Belongs to the gamma-BBH/TMLD family. In terms of assembly, homodimer. Fe(2+) is required as a cofactor. It depends on L-ascorbate as a cofactor.

The protein resides in the mitochondrion matrix. The enzyme catalyses N(6),N(6),N(6)-trimethyl-L-lysine + 2-oxoglutarate + O2 = (3S)-3-hydroxy-N(6),N(6),N(6)-trimethyl-L-lysine + succinate + CO2. It functions in the pathway amine and polyamine biosynthesis; carnitine biosynthesis. Its function is as follows. Converts trimethyllysine (TML) into hydroxytrimethyllysine (HTML). In Rattus norvegicus (Rat), this protein is Trimethyllysine dioxygenase, mitochondrial (Tmlhe).